The sequence spans 423 residues: Protein CLP1 homolog (423 aa).

ATP contacts are provided by residues glutamate 16, lysine 57, and 119-124 (DVGKST).

The protein belongs to the Clp1 family. Clp1 subfamily.

The protein resides in the nucleus. In terms of biological role, required for endonucleolytic cleavage during polyadenylation-dependent pre-mRNA 3'-end formation. This Drosophila melanogaster (Fruit fly) protein is Protein CLP1 homolog (cbc).